Here is a 427-residue protein sequence, read N- to C-terminus: MTIPTEISCPEEDAFQLLDKFSWFPSDDQRRWWEYTGPYLLKLLRDAKYPQKDQVPCLYLLQQLLVPYLGTFPVVGQAPLPWWSNVTTYGVPFELSWNLLHNIVRIGFEPLSHLAESGVDAFNKTAPEECVSRLACLDNTIDLARFRHFQHHLLVTPEEETWLLKEKAPLAKSGRGQQTLAVEFQNGGISAKAYFFPGMKSLATGLSPGKLILDSIERLALPGLKEPVHHLRSTLGLQDDGHPTDTAIAPFLLGVDLCTPERSRLKFYVTDQVVSWDRVADMWTLRGKRLEDPQCADGLALLRKLWDLLAIPEGYRSNIRPDFAFGTPPPEDYRPVMMANWTLSPKKKFPDPQIYLLTVGMNDAVVMDALVAFYEVLGWTDLASTYKDKVASYFPGPDFTKTNYIHSGVSFSYRHSKPYLSVYYSPF.

E94 is a binding site for substrate. Positions 105, 192, 194, 268, 353, 355, 419, and 423 each coordinate dimethylallyl diphosphate.

It belongs to the tryptophan dimethylallyltransferase family.

It catalyses the reaction 12alpha,13alpha-dihydroxyfumitremorgin C + dimethylallyl diphosphate = fumitremorgin B + diphosphate. The protein operates within mycotoxin biosynthesis. Functionally, 12-alpha,13-alpha-dihydroxyfumitremorgin C prenyltransferase; part of the gene cluster that mediates the biosynthesis of fumitremorgins, indole alkaloids that carry not only intriguing chemical structures, but also interesting biological and pharmacological activities. The biosynthesis of fumitremorgin-type alkaloids begins by condensation of the two amino acids L-tryptophan and L-proline to brevianamide F, catalyzed by the non-ribosomal peptide synthetase ftmA. Brevianamide F is then prenylated by the prenyltransferase ftmPT1/ftmB in the presence of dimethylallyl diphosphate, resulting in the formation of tryprostatin B. The three cytochrome P450 monooxygenases, ftmP450-1/ftmC, ftmP450-2/ftmE and ftmP450-3/FtmG, are responsible for the conversion of tryprostatin B to 6-hydroxytryprostatin B, tryprostatin A to fumitremorgin C and fumitremorgin C to 12,13-dihydroxyfumitremorgin C, respectively. The putative methyltransferase ftmMT/ftmD is expected for the conversion of 6-hydroxytryprostatin B to tryprostatin A. FtmPT2/FtmH catalyzes the prenylation of 12,13-dihydroxyfumitre-morgin C in the presence of dimethylallyl diphosphate, resulting in the formation of fumitremorgin B. Fumitremorgin B is further converted to verruculogen by ftmOx1/ftmF via the insertion of an endoperoxide bond between the two prenyl moieties. In some fungal species, verruculogen is further converted to fumitremorgin A, but the enzymes involved in this step have not been identified yet. This is 12-alpha,13-alpha-dihydroxyfumitremorgin C prenyltransferase from Aspergillus fumigatus (strain ATCC MYA-4609 / CBS 101355 / FGSC A1100 / Af293) (Neosartorya fumigata).